The chain runs to 430 residues: Phosphoserine aminotransferase 1, chloroplastic (430 aa).

Residues 1–51 (MAATTNSFLVGSNNTQIPALKPKSSSQSFLHLSKPNTVNFVSKTKPVAVRC) constitute a chloroplast transit peptide. An N-acetylvaline modification is found at Val52. Arg111 provides a ligand contact to L-glutamate. Residues 145-146 (AT), Trp171, Thr221, Asp241, and Gln264 contribute to the pyridoxal 5'-phosphate site. N6-(pyridoxal phosphate)lysine is present on Lys265. Residue 306–307 (NT) coordinates pyridoxal 5'-phosphate.

Belongs to the class-V pyridoxal-phosphate-dependent aminotransferase family. SerC subfamily. As to quaternary structure, homodimer. Requires pyridoxal 5'-phosphate as cofactor. Ubiquitous, but expressed preferentially in light-grown roots and shoots. Detected in root meristems and in root tissues surrounding the vascular bundle.

The protein resides in the plastid. It is found in the chloroplast. The enzyme catalyses O-phospho-L-serine + 2-oxoglutarate = 3-phosphooxypyruvate + L-glutamate. The catalysed reaction is 4-(phosphooxy)-L-threonine + 2-oxoglutarate = (R)-3-hydroxy-2-oxo-4-phosphooxybutanoate + L-glutamate. Its pathway is amino-acid biosynthesis; L-serine biosynthesis; L-serine from 3-phospho-D-glycerate: step 2/3. It participates in cofactor biosynthesis; pyridoxine 5'-phosphate biosynthesis; pyridoxine 5'-phosphate from D-erythrose 4-phosphate: step 3/5. With respect to regulation, inhibited by high concentration of cysteine and by 3-phosphonooxypyruvate. Not inhibited by serine, threonine, valine, glycine, tryptophan and O-acetyl-L-serine. Functionally, involved in the plastidial phosphorylated pathway of serine biosynthesis (PPSB). Catalyzes the reversible conversion of 3-phosphohydroxypyruvate to phosphoserine. The protein is Phosphoserine aminotransferase 1, chloroplastic of Arabidopsis thaliana (Mouse-ear cress).